The following is a 99-amino-acid chain: Protein SPIRAL1-like 5 (99 aa).

Residues 1–12 are compositionally biased toward gly residues; sequence MSRGGSFGGGQS. Positions 1 to 99 are disordered; sequence MSRGGSFGGG…SSLGYLFGDK (99 aa). A compositionally biased stretch (pro residues) spans 27–39; that stretch reads TPAPPVAPKPAPP. Polar residues predominate over residues 56–73; sequence KISNNNYQRVQGQNSGNF. Ser-58 carries the post-translational modification Phosphoserine.

Belongs to the SPIRAL1 family. As to expression, expressed exclusively in stems and flowers.

In terms of biological role, acts redundantly with SPR1 in maintaining the cortical microtubules organization essential for anisotropic cell growth. This chain is Protein SPIRAL1-like 5 (SP1L5), found in Arabidopsis thaliana (Mouse-ear cress).